A 470-amino-acid polypeptide reads, in one-letter code: Ribulose bisphosphate carboxylase large chain (470 aa).

Substrate-binding residues include asparagine 115 and threonine 165. Catalysis depends on lysine 167, which acts as the Proton acceptor. Lysine 169 contacts substrate. Residues lysine 193, aspartate 195, and glutamate 196 each contribute to the Mg(2+) site. Lysine 193 is modified (N6-carboxylysine). Catalysis depends on histidine 286, which acts as the Proton acceptor. Residues arginine 287, histidine 319, and serine 371 each coordinate substrate.

This sequence belongs to the RuBisCO large chain family. Type I subfamily. As to quaternary structure, heterohexadecamer of 8 large chains and 8 small chains. The cofactor is Mg(2+).

It is found in the carboxysome. The enzyme catalyses 2 (2R)-3-phosphoglycerate + 2 H(+) = D-ribulose 1,5-bisphosphate + CO2 + H2O. The catalysed reaction is D-ribulose 1,5-bisphosphate + O2 = 2-phosphoglycolate + (2R)-3-phosphoglycerate + 2 H(+). Its function is as follows. RuBisCO catalyzes two reactions: the carboxylation of D-ribulose 1,5-bisphosphate, the primary event in carbon dioxide fixation, as well as the oxidative fragmentation of the pentose substrate in the photorespiration process. Both reactions occur simultaneously and in competition at the same active site. The sequence is that of Ribulose bisphosphate carboxylase large chain from Prochlorococcus marinus (strain MIT 9303).